Consider the following 137-residue polypeptide: Histone H2B.1, sperm (137 aa).

The interval 1–43 is disordered; that stretch reads MPSQKSPTKRSPTKRSPQKGGKGAKRGGKAGKRRRGVAVKRRR. 3 short sequence motifs (SPKK motif) span residues 6–9, 11–14, and 16–19; these read SPTK and SPQK. Positions 7–43 are enriched in basic residues; that stretch reads PTKRSPTKRSPQKGGKGAKRGGKAGKRRRGVAVKRRR. A phosphoserine mark is found at Ser11 and Ser16. Ser124 is a glycosylation site (O-linked (GlcNAc) serine). Lys132 participates in a covalent cross-link: Glycyl lysine isopeptide (Lys-Gly) (interchain with G-Cter in ubiquitin).

Belongs to the histone H2B family. The nucleosome is a histone octamer containing two molecules each of H2A, H2B, H3 and H4 assembled in one H3-H4 heterotetramer and two H2A-H2B heterodimers. The octamer wraps approximately 147 bp of DNA. Monoubiquitination of Lys-132 gives a specific tag for epigenetic transcriptional activation and is also prerequisite for histone H3 'Lys-4' and 'Lys-79' methylation. In terms of processing, phosphorylated on SPKK motifs 2 and 3; which may regulate DNA binding. Dephosphorylated during maturation of spermatids to mature sperm and rephosphorylated at fertilization. Post-translationally, glcNAcylation at Ser-124 promotes monoubiquitination of Lys-132. It fluctuates in response to extracellular glucose, and associates with transcribed genes.

Its subcellular location is the nucleus. It is found in the chromosome. In terms of biological role, core component of nucleosome. Nucleosomes wrap and compact DNA into chromatin, limiting DNA accessibility to the cellular machineries which require DNA as a template. Histones thereby play a central role in transcription regulation, DNA repair, DNA replication and chromosomal stability. DNA accessibility is regulated via a complex set of post-translational modifications of histones, also called histone code, and nucleosome remodeling. This chain is Histone H2B.1, sperm, found in Psammechinus miliaris (Green sea urchin).